We begin with the raw amino-acid sequence, 216 residues long: Probable transaldolase (216 aa).

The active-site Schiff-base intermediate with substrate is Lys-83.

The protein belongs to the transaldolase family. Type 3B subfamily.

The protein resides in the cytoplasm. The catalysed reaction is D-sedoheptulose 7-phosphate + D-glyceraldehyde 3-phosphate = D-erythrose 4-phosphate + beta-D-fructose 6-phosphate. Its pathway is carbohydrate degradation; pentose phosphate pathway; D-glyceraldehyde 3-phosphate and beta-D-fructose 6-phosphate from D-ribose 5-phosphate and D-xylulose 5-phosphate (non-oxidative stage): step 2/3. Transaldolase is important for the balance of metabolites in the pentose-phosphate pathway. The protein is Probable transaldolase of Methanococcus aeolicus (strain ATCC BAA-1280 / DSM 17508 / OCM 812 / Nankai-3).